A 99-amino-acid chain; its full sequence is Putative septation protein SpoVG (99 aa).

The protein belongs to the SpoVG family.

Functionally, could be involved in septation. This Aster yellows witches'-broom phytoplasma (strain AYWB) protein is Putative septation protein SpoVG.